Reading from the N-terminus, the 280-residue chain is 2,3,4,5-tetrahydropyridine-2,6-dicarboxylate N-succinyltransferase (280 aa).

Substrate contacts are provided by arginine 107 and aspartate 144.

Belongs to the transferase hexapeptide repeat family. As to quaternary structure, homotrimer.

It localises to the cytoplasm. The catalysed reaction is (S)-2,3,4,5-tetrahydrodipicolinate + succinyl-CoA + H2O = (S)-2-succinylamino-6-oxoheptanedioate + CoA. It participates in amino-acid biosynthesis; L-lysine biosynthesis via DAP pathway; LL-2,6-diaminopimelate from (S)-tetrahydrodipicolinate (succinylase route): step 1/3. The polypeptide is 2,3,4,5-tetrahydropyridine-2,6-dicarboxylate N-succinyltransferase (Granulibacter bethesdensis (strain ATCC BAA-1260 / CGDNIH1)).